The sequence spans 327 residues: Cobalamin biosynthesis protein CobD (327 aa).

The next 4 helical transmembrane spans lie at 61-78 (MWLT…GLVI), 80-102 (SILP…ILLA), 160-182 (GIVA…YKLI), and 300-322 (AALV…ASLV).

It belongs to the CobD/CbiB family.

It localises to the cell membrane. Its pathway is cofactor biosynthesis; adenosylcobalamin biosynthesis. Its function is as follows. Converts cobyric acid to cobinamide by the addition of aminopropanol on the F carboxylic group. The sequence is that of Cobalamin biosynthesis protein CobD from Brucella suis biovar 1 (strain 1330).